We begin with the raw amino-acid sequence, 83 residues long: Disintegrin isoform D-3 (83 aa).

The region spanning 2–83 (PPVCGNELLE…GKSSDCPWNH (82 aa)) is the Disintegrin domain. 7 disulfides stabilise this stretch: Cys-5–Cys-24, Cys-16–Cys-34, Cys-18–Cys-29, Cys-28–Cys-51, Cys-42–Cys-48, Cys-47–Cys-72, and Cys-60–Cys-79. The Cell attachment site motif lies at 64–66 (RGD).

This sequence belongs to the venom metalloproteinase (M12B) family. P-II subfamily. P-IIa sub-subfamily. Monomer (disintegrin). Expressed by the venom gland.

The protein resides in the secreted. Inhibits fibrinogen interaction with platelets. Acts by binding to alpha-IIb/beta-3 (ITGA2B/ITGB3) on the platelet surface and inhibits aggregation induced by ADP, thrombin, platelet-activating factor and collagen. In Bitis arietans (African puff adder), this protein is Disintegrin isoform D-3.